We begin with the raw amino-acid sequence, 318 residues long: NADH-ubiquinone oxidoreductase chain 1 (318 aa).

Transmembrane regions (helical) follow at residues 2–22 (PMTN…FLML), 68–88 (ITLY…LWTP), 100–120 (LGLL…LWSG), 146–166 (LAII…STLV), 171–191 (HLWL…STLA), 213–233 (IEYA…NIIM), 253–273 (ELYT…FLWI), and 285–305 (LMHL…MWYI).

This sequence belongs to the complex I subunit 1 family. In terms of assembly, core subunit of respiratory chain NADH dehydrogenase (Complex I) which is composed of 45 different subunits.

The protein resides in the mitochondrion inner membrane. The catalysed reaction is a ubiquinone + NADH + 5 H(+)(in) = a ubiquinol + NAD(+) + 4 H(+)(out). Functionally, core subunit of the mitochondrial membrane respiratory chain NADH dehydrogenase (Complex I) which catalyzes electron transfer from NADH through the respiratory chain, using ubiquinone as an electron acceptor. Essential for the catalytic activity and assembly of complex I. In Pan troglodytes (Chimpanzee), this protein is NADH-ubiquinone oxidoreductase chain 1 (MT-ND1).